The primary structure comprises 87 residues: Small ribosomal subunit protein uS17 (87 aa).

Belongs to the universal ribosomal protein uS17 family. Part of the 30S ribosomal subunit.

One of the primary rRNA binding proteins, it binds specifically to the 5'-end of 16S ribosomal RNA. The chain is Small ribosomal subunit protein uS17 from Bacillus subtilis (strain 168).